A 132-amino-acid polypeptide reads, in one-letter code: Small ribosomal subunit protein uS11 (132 aa).

It belongs to the universal ribosomal protein uS11 family. As to quaternary structure, part of the 30S ribosomal subunit. Interacts with proteins S7 and S18. Binds to IF-3.

Its function is as follows. Located on the platform of the 30S subunit, it bridges several disparate RNA helices of the 16S rRNA. Forms part of the Shine-Dalgarno cleft in the 70S ribosome. The polypeptide is Small ribosomal subunit protein uS11 (Alcanivorax borkumensis (strain ATCC 700651 / DSM 11573 / NCIMB 13689 / SK2)).